The following is a 118-amino-acid chain: Telomere bouquet protein 2 (118 aa).

In terms of assembly, interacts with bqt1. The bqt1-bqt2-sad1 complex binds rap1.

The protein resides in the cytoplasm. The protein localises to the nucleus. It localises to the cytoskeleton. Its subcellular location is the microtubule organizing center. It is found in the spindle pole body. The protein resides in the chromosome. The protein localises to the telomere. In terms of biological role, involved in chromosome segregation. During meiotic prophase, connects telomeres to the spindle pole body by forming a bridge between the telomere protein rap1 and the spindle pole body protein sad1. In Schizosaccharomyces pombe (strain 972 / ATCC 24843) (Fission yeast), this protein is Telomere bouquet protein 2 (bqt2).